The sequence spans 331 residues: Ketol-acid reductoisomerase (NADP(+)) (331 aa).

One can recognise a KARI N-terminal Rossmann domain in the interval 2–182; sequence ARLYYDADAN…GGTRAGILET (181 aa). Residues 25 to 28, serine 51, serine 53, and 83 to 86 each bind NADP(+); these read YGSQ and DEVQ. The active site involves histidine 108. An NADP(+)-binding site is contributed by glycine 134. The KARI C-terminal knotted domain maps to 183–328; sequence TFREETETDL…KDLRAMFSWT (146 aa). Residues aspartate 191, glutamate 195, glutamate 227, and glutamate 231 each contribute to the Mg(2+) site. Residue serine 252 participates in substrate binding.

Belongs to the ketol-acid reductoisomerase family. Mg(2+) serves as cofactor.

It catalyses the reaction (2R)-2,3-dihydroxy-3-methylbutanoate + NADP(+) = (2S)-2-acetolactate + NADPH + H(+). The enzyme catalyses (2R,3R)-2,3-dihydroxy-3-methylpentanoate + NADP(+) = (S)-2-ethyl-2-hydroxy-3-oxobutanoate + NADPH + H(+). Its pathway is amino-acid biosynthesis; L-isoleucine biosynthesis; L-isoleucine from 2-oxobutanoate: step 2/4. It functions in the pathway amino-acid biosynthesis; L-valine biosynthesis; L-valine from pyruvate: step 2/4. In terms of biological role, involved in the biosynthesis of branched-chain amino acids (BCAA). Catalyzes an alkyl-migration followed by a ketol-acid reduction of (S)-2-acetolactate (S2AL) to yield (R)-2,3-dihydroxy-isovalerate. In the isomerase reaction, S2AL is rearranged via a Mg-dependent methyl migration to produce 3-hydroxy-3-methyl-2-ketobutyrate (HMKB). In the reductase reaction, this 2-ketoacid undergoes a metal-dependent reduction by NADPH to yield (R)-2,3-dihydroxy-isovalerate. This Acaryochloris marina (strain MBIC 11017) protein is Ketol-acid reductoisomerase (NADP(+)).